A 60-amino-acid chain; its full sequence is Small ribosomal subunit protein bS21 (60 aa).

A disordered region spans residues 36–60; the sequence is QFFETPQEKHKRKEATRRRQRSRRR. The segment covering 44–60 has biased composition (basic residues); the sequence is KHKRKEATRRRQRSRRR.

This sequence belongs to the bacterial ribosomal protein bS21 family.

The protein is Small ribosomal subunit protein bS21 (rpsU) of Synechocystis sp. (strain ATCC 27184 / PCC 6803 / Kazusa).